Here is a 256-residue protein sequence, read N- to C-terminus: ATG8-interacting protein 1 (256 aa).

The short motif at 14–17 (WEVV) is the AIM (Atg8-family-interacting motif) element. Residues 181 to 200 (ANAIWSLFFAAAVTGLVVLG) form a helical membrane-spanning segment. The AIM (Atg8-family-interacting motif) signature appears at 208–211 (WQVL).

As to quaternary structure, interacts with ATG8F. Interacts with ATG8H. Interacts with APE1 and PSBS/NPQ4.

The protein resides in the endoplasmic reticulum membrane. Its subcellular location is the membrane. It localises to the plastid. The protein localises to the chloroplast membrane. In terms of biological role, involved in a special stress-induced plastid-to-vacuole protein trafficking pathway. Interacts with ATG8F in plastid bodies to subsequently enable their delivery to the vacuole by an autophagic pathway. Interacts with the plastid proteins APE1 and PSBS/NPQ4 and may recruit them as cargo into plastid bodies that may be recognized by the autophagy machinery for degradation in the vacuole. Involved in the alleviation of damage caused by salt stress during plant development, probably through its involvement in plastid-to-vacuole and ER-to-vacuole trafficking. Plays a role in seed germination in response to exogenous abscisic acid (ABA) treatment. The polypeptide is ATG8-interacting protein 1 (Arabidopsis thaliana (Mouse-ear cress)).